We begin with the raw amino-acid sequence, 563 residues long: DNA polymerase III subunit tau (563 aa).

45-52 is an ATP binding site; it reads GPRGTGKT. Positions 64, 73, 76, and 79 each coordinate Zn(2+).

This sequence belongs to the DnaX/STICHEL family. In terms of assembly, component of the DNA clamp loading complex consisting of tau(3):delta(1):delta'(1). The DNA polymerase III holoenzyme complex contains at least 10 different subunits organized into 3 functionally essential subassemblies: the Pol III core, the beta sliding clamp processivity factor and the clamp-loading complex. The Pol III core (subunits alpha, epsilon and theta) contains the polymerase and the 3'-5' exonuclease proofreading activities. The polymerase is tethered to the template via the dimeric beta sliding clamp processivity factor. The DNA clamp-loading complex assembles the beta sliding clamp onto the primed template and plays a central role in the organization and communication at the replication fork. Forms a complex with replicative DNA helicase DnaB (shown with G.stearothermophilus DnaB) tau(3):DnaB(6); a single ATP hydrolysis even is sufficient for complex formation. Colocalizes with DNA helicases PriA, RecQ and RecS.

It localises to the cytoplasm. The protein resides in the nucleoid. It catalyses the reaction DNA(n) + a 2'-deoxyribonucleoside 5'-triphosphate = DNA(n+1) + diphosphate. Its function is as follows. Part of the beta sliding clamp loading complex, which hydrolyzes ATP to load the beta clamp onto primed DNA to form the DNA replication pre-initiation complex. DNA polymerase III is a complex, multichain enzyme responsible for most of the replicative DNA synthesis in bacteria. The chain is DNA polymerase III subunit tau from Bacillus subtilis (strain 168).